The following is a 1892-amino-acid chain: Protein TIC 214 (1892 aa).

The next 6 membrane-spanning stretches (helical) occupy residues 18 to 38, 64 to 84, 87 to 107, 124 to 144, 172 to 192, and 221 to 241; these read IINSVVVVGLYYGFLTTFSIG, FITGQLMMFISIYYAPLHLAL, PHTITVLALPYLLFHFFWNNH, LSIQCVFLNNLIFQLFNHFIL, VGWLIGHIFFMKWLGLVLVWI, and IFSILLFITCVYYLGRIPSPI. Disordered regions lie at residues 250–300, 794–814, and 1581–1609; these read SKTE…EGWD, REEQTKREEKKEKDKKGENKR, and RIQEEKEPASQGEKERGSDIENKGNLGPV. The span at 256 to 268 shows a compositional bias: acidic residues; it reads VESEEEKDVEIET. Positions 1581 to 1602 are enriched in basic and acidic residues; that stretch reads RIQEEKEPASQGEKERGSDIEN.

The protein belongs to the TIC214 family. In terms of assembly, part of the Tic complex.

The protein resides in the plastid. It is found in the chloroplast inner membrane. In terms of biological role, involved in protein precursor import into chloroplasts. May be part of an intermediate translocation complex acting as a protein-conducting channel at the inner envelope. In Nicotiana tomentosiformis (Tobacco), this protein is Protein TIC 214.